A 368-amino-acid chain; its full sequence is Probable magnesium transporter NIPA3 (368 aa).

Residues 1-18 lie on the Extracellular side of the membrane; the sequence is MASLSGSWRDAYKGMSSD. The chain crosses the membrane as a helical span at residues 19-39; that stretch reads NIKGLVLALSSSLFIGASFIV. At 40-66 the chain is on the cytoplasmic side; the sequence is KKKGLKRAGASGLRAGSGGYSYLLEPL. A helical membrane pass occupies residues 67–87; it reads WWVGMITMIVGEIANFAAYAF. Over 88-90 the chain is Extracellular; that stretch reads APA. The helical transmembrane segment at 91-111 threads the bilayer; sequence ILVTPLGALSIIISAALAHVI. At 112 to 115 the chain is on the cytoplasmic side; sequence LHEK. A helical transmembrane segment spans residues 116 to 136; it reads LHTFGLLGCVLCVVGSITIVL. Topologically, residues 137–157 are extracellular; the sequence is HAPQEQEIDSVLQVWNLATEP. The chain crosses the membrane as a helical span at residues 158-178; sequence AFLLYAAAVVGAAIILIVQFV. The Cytoplasmic segment spans residues 179 to 189; sequence PQYGQSHVMVY. Residues 190–210 traverse the membrane as a helical segment; the sequence is IGVCSLVGSLSVMSVKALGIA. At 211–220 the chain is on the extracellular side; it reads LKLTFSGMNQ. Residues 221–241 form a helical membrane-spanning segment; sequence LIYPQTWVFTLIVLTCVITQM. Residues 242–255 are Cytoplasmic-facing; that stretch reads NYLNKALDTFNTAV. The helical transmembrane segment at 256–276 threads the bilayer; it reads VSPIYYVMFTSLTILASVIMF. Residues 277-283 lie on the Extracellular side of the membrane; that stretch reads KDWDRQD. Residues 284 to 304 form a helical membrane-spanning segment; it reads GTQIVTELCGFVTILSGTFLL. Residues 305-368 are Cytoplasmic-facing; sequence HKTKDMVDGS…ILPQDGPEAV (64 aa).

This sequence belongs to the NIPA (TC 2.A.7) family. As to quaternary structure, homodimer.

It is found in the cell membrane. The protein localises to the early endosome. Its function is as follows. Acts as a Mg(2+) transporter. Can also transport other divalent cations such as Fe(2+), Sr(2+), Ba(2+), Mn(2+) and Co(2+) but to a much less extent than Mg(2+). This chain is Probable magnesium transporter NIPA3, found in Arabidopsis thaliana (Mouse-ear cress).